We begin with the raw amino-acid sequence, 504 residues long: Maturase K (504 aa).

It belongs to the intron maturase 2 family. MatK subfamily.

The protein resides in the plastid. It localises to the chloroplast. Usually encoded in the trnK tRNA gene intron. Probably assists in splicing its own and other chloroplast group II introns. This Betula papyrifera (Paper birch) protein is Maturase K.